The sequence spans 215 residues: Adenylate kinase (215 aa).

10-15 lines the ATP pocket; the sequence is GAGKGT. Positions 30–59 are NMP; the sequence is STGDILRENVKNQTELGKKAKEYMDKGLLV. AMP is bound by residues Thr31, Arg36, 57-59, 85-88, and Gln92; these read LLV and GFPR. Positions 126–163 are LID; that stretch reads GRRICKSCGASFHVVYRPPKKEGICDICGGQLYQREDD. Arg127 provides a ligand contact to ATP. Residues Cys130 and Cys133 each contribute to the Zn(2+) site. Residue 136-137 participates in ATP binding; that stretch reads SF. Residues Cys150 and Cys153 each contribute to the Zn(2+) site. Arg160 and Arg171 together coordinate AMP. Residue Glu199 coordinates ATP.

The protein belongs to the adenylate kinase family. In terms of assembly, monomer.

It localises to the cytoplasm. It carries out the reaction AMP + ATP = 2 ADP. It participates in purine metabolism; AMP biosynthesis via salvage pathway; AMP from ADP: step 1/1. In terms of biological role, catalyzes the reversible transfer of the terminal phosphate group between ATP and AMP. Plays an important role in cellular energy homeostasis and in adenine nucleotide metabolism. The chain is Adenylate kinase from Caldicellulosiruptor saccharolyticus (strain ATCC 43494 / DSM 8903 / Tp8T 6331).